A 90-amino-acid polypeptide reads, in one-letter code: uncharacterized protein (90 aa).

The tract at residues 25-90 (GEAAYNSPTN…PPIAPPPILD (66 aa)) is disordered. Polar residues-rich tracts occupy residues 30-54 (NSPT…TESV) and 65-79 (NDQT…SNVN).

This is an uncharacterized protein from Bacillus subtilis (strain 168).